The chain runs to 330 residues: 5'-AMP-activated protein kinase subunit gamma-1 (330 aa).

Over residues 1-12 the composition is skewed to low complexity; the sequence is MESVAAESAPAP. The tract at residues 1–25 is disordered; that stretch reads MESVAAESAPAPENEHSQETPESNS. 3 CBS domains span residues 42-102, 124-186, and 197-259; these read PTSS…KSAL, SFKP…PKPE, and IGTY…NLDV. ADP is bound by residues Arg-69, 84-89, Val-129, 150-151, and Lys-169; these read MLTITD and HR. Residues Arg-69, 84-89, Val-129, His-150, 150-151, Lys-169, Thr-199, Ala-204, 225-226, and 241-244 each bind AMP; these read MLTITD, HR, SA, and SKFD. Residues Arg-69, 84–89, Val-129, 150–151, Arg-151, and Lys-169 each bind ATP; these read MLTITD and HR. The AMPK pseudosubstrate signature appears at 137 to 158; sequence LFDAVSSLIRNKIHRLPVIDPE. Position 241-244 (241-244) interacts with ADP; it reads SKFD. Residue 241–244 participates in ATP binding; that stretch reads SKFD. Ser-260 is modified (phosphoserine; by ULK1). Thr-262 carries the phosphothreonine; by ULK1 modification. Arg-268 lines the ADP pocket. Arg-268 contributes to the AMP binding site. Arg-268 serves as a coordination point for ATP. Position 269 is a phosphoserine; by ULK1 (Ser-269). The region spanning 271 to 328 is the CBS 4 domain; the sequence is YFEGVLKCYLHETLEAIINRLVEAEVHRLVVVDEHDVVKGIVSLSDILQALVLTGGEK. Residues Leu-276 and 297 to 298 contribute to the ADP site; that span reads HR. AMP-binding positions include Leu-276, His-297, 297 to 298, and 313 to 316; these read HR and SLSD. ATP-binding positions include Leu-276 and 297 to 298; that span reads HR.

This sequence belongs to the 5'-AMP-activated protein kinase gamma subunit family. In terms of assembly, AMPK is a heterotrimer of an alpha catalytic subunit (PRKAA1 or PRKAA2), a beta (PRKAB1 or PRKAB2) and a gamma non-catalytic subunits (PRKAG1, PRKAG2 or PRKAG3). Interacts with FNIP1 and FNIP2. Phosphorylated by ULK1 and ULK2; leading to negatively regulate AMPK activity and suggesting the existence of a regulatory feedback loop between ULK1, ULK2 and AMPK. There is some ambiguity for a phosphosite: Ser-260/Thr-262. In terms of processing, glycosylated; O-GlcNAcylated by OGT, promoting the AMP-activated protein kinase (AMPK) activity. As to expression, highly expressed in heart and brain, also found in kidney, white adipose tissue, lung and spleen.

Functionally, AMP/ATP-binding subunit of AMP-activated protein kinase (AMPK), an energy sensor protein kinase that plays a key role in regulating cellular energy metabolism. In response to reduction of intracellular ATP levels, AMPK activates energy-producing pathways and inhibits energy-consuming processes: inhibits protein, carbohydrate and lipid biosynthesis, as well as cell growth and proliferation. AMPK acts via direct phosphorylation of metabolic enzymes, and by longer-term effects via phosphorylation of transcription regulators. Also acts as a regulator of cellular polarity by remodeling the actin cytoskeleton; probably by indirectly activating myosin. Gamma non-catalytic subunit mediates binding to AMP, ADP and ATP, leading to activate or inhibit AMPK: AMP-binding results in allosteric activation of alpha catalytic subunit (PRKAA1 or PRKAA2) both by inducing phosphorylation and preventing dephosphorylation of catalytic subunits. ADP also stimulates phosphorylation, without stimulating already phosphorylated catalytic subunit. ATP promotes dephosphorylation of catalytic subunit, rendering the AMPK enzyme inactive. This Rattus norvegicus (Rat) protein is 5'-AMP-activated protein kinase subunit gamma-1 (Prkag1).